The chain runs to 551 residues: Cytochrome P450 monooxygenase sdnQ (551 aa).

Positions 1 to 23 (MDDPSIASGFQQGTGRTTGANGT) are disordered. Over residues 8–23 (SGFQQGTGRTTGANGT) the composition is skewed to polar residues. Asn21 carries an N-linked (GlcNAc...) asparagine glycan. A helical membrane pass occupies residues 41 to 57 (CIGTSLLVALLTTIIIY). Cys491 contacts heme.

It belongs to the cytochrome P450 family. Requires heme as cofactor.

Its subcellular location is the membrane. Its pathway is antibiotic biosynthesis. In terms of biological role, cytochrome P450 monooxygenase; part of the gene cluster that mediates the biosynthesis of sordarin and hypoxysordarin, glycoside antibiotics with a unique tetracyclic diterpene aglycone structure. First, the geranylgeranyl diphosphate synthase sdnC constructs GGDP from farnesyl diphosphate and isopentenyl diphosphate. The diterpene cyclase sdnA then catalyzes the cyclization of GGDP to afford cycloaraneosene. Cycloaraneosene is then hydroxylated four times by the putative cytochrome P450 monooxygenases sdnB, sdnE, sdnF and sdnH to give a hydroxylated cycloaraneosene derivative such as cycloaraneosene-8,9,13,19-tetraol. Although the order of the hydroxylations is unclear, at least C8, C9 and C13 of the cycloaraneosene skeleton are hydroxylated before the sordaricin formation. Dehydration of the 13-hydroxy group of the hydroxylated cycloaraneosene derivative might be catalyzed by an unassigned hypothetical protein such as sdnG and sdnP to construct the cyclopentadiene moiety. The FAD-dependent oxidoreductase sdnN is proposed to catalyze the oxidation at C9 of the hydroxylated cycloaraneosene derivative and also catalyze the Baeyer-Villiger oxidation to give the lactone intermediate. The presumed lactone intermediate would be hydrolyzed to give an acrolein moiety and a carboxylate moiety. Then, [4+2]cycloaddition would occur between the acrolein moiety and the cyclopentadiene moiety to give sordaricin. SdnN might also be involved in the [4+2]cycloaddition after the hypothesized oxidation to accommodate the oxidized product and prompt the [4+2]cycloaddition. GDP-6-deoxy-D-altrose may be biosynthesized from GDP-D-mannose by the putative GDP-mannose-4,6-dehydratase sdnI and the short-chain dehydrogenase sdnK. The glycosyltransferase sdnJ catalyzes the attachment of 6-deoxy-D-altrose onto the 19-hydroxy group of sordaricin to give 4'-O-demethylsordarin. The methyltransferase sdnD would complete the biosynthesis of sordarin. Sordarin can be further modified into hypoxysordarin. The unique acyl chain at the 3'-hydroxy group of hypoxysordarin would be constructed by an iterative type I PKS sdnO and the trans-acting polyketide methyltransferase sdnL. SdnL would be responsible for the introduction of an alpha-methyl group of the polyketide chain. Alternatively, the beta-lactamase-like protein sdnR might be responsible for the cleavage and transfer of the polyketide chain from the PKS sdnO to sordarin. Two putative cytochrome P450 monooxygenases, sdnQ and sdnT, might catalyze the epoxidations of the polyketide chain to complete the biosynthesis of hypoxysordarin. Transcriptional regulators sdnM and sdnS are presumably encoded for the transcriptional regulation of the expression of the sdn gene cluster. In Sordaria araneosa (Pleurage araneosa), this protein is Cytochrome P450 monooxygenase sdnQ.